The following is a 395-amino-acid chain: Protein SGT1 (395 aa).

Lys32 is covalently cross-linked (Glycyl lysine isopeptide (Lys-Gly) (interchain with G-Cter in ubiquitin)). A disordered region spans residues Lys137–Ile175. Residues Ser168 and Ser171 each carry the phosphoserine modification. The CS domain maps to Ser182–Glu277. The SGS domain occupies Ser312 to Trp395. Residues Asp373–Trp395 form a disordered region.

Belongs to the SGT1 family. In terms of assembly, interacts with SKP1/CBF3D. Part of SCF E3 ubiquitin ligase complexes containing SKP1, CDC53, HRT1 and some F-box proteins. Interacts with CIR1/CDC35.

In terms of biological role, involved in ubiquitination and subsequent proteasomal degradation of target proteins. Required for both entry into S phase and kinetochore function. Also involved in cyclic AMP (cAMP) pathway, possibly by participating in the assembly or the conformational activation of specific multiprotein complexes. The sequence is that of Protein SGT1 from Saccharomyces cerevisiae (strain ATCC 204508 / S288c) (Baker's yeast).